The primary structure comprises 138 residues: Putative nickel-responsive regulator (138 aa).

Ni(2+) contacts are provided by His76, His87, His89, and Cys95.

Belongs to the transcriptional regulatory CopG/NikR family. Requires Ni(2+) as cofactor.

Its function is as follows. Transcriptional regulator. This Pseudomonas putida (strain ATCC 47054 / DSM 6125 / CFBP 8728 / NCIMB 11950 / KT2440) protein is Putative nickel-responsive regulator.